Consider the following 151-residue polypeptide: uncharacterized protein (151 aa).

The segment covering 40 to 57 (QMNRRNSENNTFDASNVG) has biased composition (polar residues). The interval 40–125 (QMNRRNSENN…KRQPHYAEPI (86 aa)) is disordered. Over residues 83–110 (QRQNGRQHQHAGQQQPQHQHTQSQTRQT) the composition is skewed to low complexity.

This is an uncharacterized protein from Bacillus subtilis (strain 168).